The sequence spans 170 residues: Photosystem II extrinsic protein V (170 aa).

The N-terminal stretch at 1 to 33 (MVSVFSSLRQSFKGLLVLVPVLIGLAFISPAEA) is a signal peptide. 4 residues coordinate heme c: Cys-70, Cys-73, His-74, and Met-137.

Belongs to the cytochrome c family. PsbV subfamily. As to quaternary structure, PSII is composed of 1 copy each of membrane proteins PsbA, PsbB, PsbC, PsbD, PsbE, PsbF, PsbH, PsbI, PsbJ, PsbK, PsbL, PsbM, PsbT, PsbX, PsbY, PsbZ, Psb30/Ycf12, peripheral proteins PsbO, CyanoQ (PsbQ), PsbU, PsbV and a large number of cofactors. It forms dimeric complexes. The cofactor is heme c.

It localises to the cellular thylakoid membrane. Its function is as follows. One of the extrinsic, lumenal subunits of photosystem II (PSII). PSII is a light-driven water plastoquinone oxidoreductase, using light energy to abstract electrons from H(2)O, generating a proton gradient subsequently used for ATP formation. The extrinsic proteins stabilize the structure of photosystem II oxygen-evolving complex (OEC), the ion environment of oxygen evolution and protect the OEC against heat-induced inactivation. Low-potential cytochrome c that plays a role in the OEC of PSII. The polypeptide is Photosystem II extrinsic protein V (Synechococcus sp. (strain CC9902)).